A 303-amino-acid polypeptide reads, in one-letter code: Shikimate kinase 1, chloroplastic (303 aa).

A chloroplast-targeting transit peptide spans 1 to 66 (MEAAITQRIQ…QRRAVSPAVS (66 aa)). 109–116 (GMMGSGKT) serves as a coordination point for ATP. T116 contacts Mg(2+). D134, R159, and G181 together coordinate substrate. Residue R220 participates in ATP binding.

Belongs to the shikimate kinase family. As to quaternary structure, homodimer. The cofactor is Mg(2+).

It is found in the plastid. The protein localises to the chloroplast. The catalysed reaction is shikimate + ATP = 3-phosphoshikimate + ADP + H(+). Its pathway is metabolic intermediate biosynthesis; chorismate biosynthesis; chorismate from D-erythrose 4-phosphate and phosphoenolpyruvate: step 5/7. Functionally, catalyzes the specific phosphorylation of the 3-hydroxyl group of shikimic acid using ATP as a cosubstrate. This is Shikimate kinase 1, chloroplastic (SK1) from Arabidopsis thaliana (Mouse-ear cress).